A 1006-amino-acid chain; its full sequence is Probable sulfite reductase [NADPH] flavoprotein component (1006 aa).

The 231-residue stretch at 622–852 (EKVFTVHVRA…AVKTSVMKLP (231 aa)) folds into the FAD-binding FR-type domain. FAD contacts are provided by residues 658–669 (YDIGEALGVYGV) and 788–798 (IKRREYSISSS).

FAD serves as cofactor. The cofactor is FMN.

The catalysed reaction is hydrogen sulfide + 3 NADP(+) + 3 H2O = sulfite + 3 NADPH + 4 H(+). The protein operates within sulfur metabolism; hydrogen sulfide biosynthesis; hydrogen sulfide from sulfite (NADPH route): step 1/1. This enzyme catalyzes the 6-electron reduction of sulfite to sulfide. This is one of several activities required for the biosynthesis of L-cysteine from sulfate. In Schizosaccharomyces pombe (strain 972 / ATCC 24843) (Fission yeast), this protein is Probable sulfite reductase [NADPH] flavoprotein component.